A 289-amino-acid chain; its full sequence is Segregation and condensation protein A (289 aa).

The span at 1 to 18 (MSEDRRSPTDEAPREGEL) shows a compositional bias: basic and acidic residues. Residues 1–24 (MSEDRRSPTDEAPREGELPRSPGD) form a disordered region.

It belongs to the ScpA family. Component of the Structural Maintenance of Chromosome (SMC) condensin-like complex composed of ScpA, ScpB and the Smc homodimer. ScpA and ScpB bind to the head domain of Smc. The presence of the three proteins is required for the association of the complex with DNA.

It is found in the cytoplasm. In terms of biological role, a conditionally essential component of the chromosome segregation machinery. Participates in chromosomal partition during cell division. Important for positioning of ParB-parS complexes (ori of replication) and of the ter replication site, as well as for segration of the ParB-parS complex and thus chromosome segregation. May act via the formation of a condensin-like complex containing Smc, ScpA and ScpB that pulls DNA away from mid-cell into both cell halves. The polypeptide is Segregation and condensation protein A (Myxococcus xanthus (strain DK1622)).